We begin with the raw amino-acid sequence, 423 residues long: Large ribosomal subunit protein mL37 (423 aa).

A mitochondrion-targeting transit peptide spans 1-29 (MALASGPARRVLARPWGLGLEGCGVPRRG).

This sequence belongs to the mitochondrion-specific ribosomal protein mL37 family. In terms of assembly, component of the mitochondrial ribosome large subunit (39S) which comprises a 16S rRNA and about 50 distinct proteins.

The protein resides in the mitochondrion. This is Large ribosomal subunit protein mL37 (MRPL37) from Bos taurus (Bovine).